The chain runs to 510 residues: NAD(P)H-quinone oxidoreductase subunit 2, chloroplastic (510 aa).

The next 12 helical transmembrane spans lie at 24-44 (LLLF…GLIL), 59-79 (WFYF…FFRW), 99-119 (IFQF…VEYI), 124-144 (MAIT…MFLC), 149-169 (LITI…LSGY), 184-204 (LLMG…LYGL), 229-249 (ISIA…PAPF), 295-315 (WHLL…LIAL), 323-343 (MLAY…IVGD), 354-374 (YMLF…SFGL), 395-415 (ALSS…AGFF), and 418-438 (LYLF…IGLL).

The protein belongs to the complex I subunit 2 family. NDH is composed of at least 16 different subunits, 5 of which are encoded in the nucleus.

It localises to the plastid. The protein resides in the chloroplast thylakoid membrane. It catalyses the reaction a plastoquinone + NADH + (n+1) H(+)(in) = a plastoquinol + NAD(+) + n H(+)(out). The enzyme catalyses a plastoquinone + NADPH + (n+1) H(+)(in) = a plastoquinol + NADP(+) + n H(+)(out). In terms of biological role, NDH shuttles electrons from NAD(P)H:plastoquinone, via FMN and iron-sulfur (Fe-S) centers, to quinones in the photosynthetic chain and possibly in a chloroplast respiratory chain. The immediate electron acceptor for the enzyme in this species is believed to be plastoquinone. Couples the redox reaction to proton translocation, and thus conserves the redox energy in a proton gradient. This Coelogyne cristata (Orchid) protein is NAD(P)H-quinone oxidoreductase subunit 2, chloroplastic.